Consider the following 432-residue polypeptide: MRVVILGSGVVGVTSAWYLSQAGHDVTVIDRESGPAQETSAANAGQISPGYAAPWAAPGVPLKAIKWMFQRHAPLAVRLDGTPFQLKWMWQMLRNCDTRHYMENKGRMVRLAEYSRDCLKTLRAATGIEYEGRQGGTLQLFRTAQQYENATRDIAVLEDAGVPYQLLEASRLAEVEPALAEVAHKLTGGLRLPNDETGDCQLFTQRLARMAEQAGVTFRFNTPVEKLLYENDQIYGVKCADEIIKADAYVMAFGSYSTAMLKGIVDIPVYPLKGYSLTIPIVEPDGAPVSTILDETYKIAITRFDKRIRVGGMAEIVGFNTDLLQPHRETLEMVVRDLFPRGGHIEQATFWTGLRPMTPDGTPVVGRTRYKNLWLNTGHGTLGWTMACGSGQLLSDILSGRTPAIPYDDLSVARYRSDFTPTRPQRLHSAHN.

Position 3-17 (3-17 (VVILGSGVVGVTSAW)) interacts with FAD.

It belongs to the DadA oxidoreductase family. FAD is required as a cofactor.

It catalyses the reaction a D-alpha-amino acid + A + H2O = a 2-oxocarboxylate + AH2 + NH4(+). It functions in the pathway amino-acid degradation; D-alanine degradation; NH(3) and pyruvate from D-alanine: step 1/1. Functionally, oxidative deamination of D-amino acids. The protein is D-amino acid dehydrogenase of Salmonella paratyphi C (strain RKS4594).